Here is a 287-residue protein sequence, read N- to C-terminus: Oxaloacetate decarboxylase (287 aa).

Residue serine 50 participates in substrate binding. Aspartate 88 provides a ligand contact to Mg(2+). Positions 159 and 235 each coordinate substrate.

Belongs to the isocitrate lyase/PEP mutase superfamily. Oxaloacetate decarboxylase family. In terms of assembly, homotetramer; dimer of dimers. Mg(2+) is required as a cofactor.

The enzyme catalyses oxaloacetate + H(+) = pyruvate + CO2. In terms of biological role, catalyzes the decarboxylation of oxaloacetate into pyruvate. Seems to play a role in maintaining cellular concentrations of bicarbonate and pyruvate. The sequence is that of Oxaloacetate decarboxylase from Chromohalobacter salexigens (strain ATCC BAA-138 / DSM 3043 / CIP 106854 / NCIMB 13768 / 1H11).